The primary structure comprises 333 residues: Anthranilate phosphoribosyltransferase (333 aa).

5-phospho-alpha-D-ribose 1-diphosphate contacts are provided by residues Gly78, 81-82, Thr86, 88-91, 106-114, and Ser118; these read GD, NVST, and KHGNYSVSS. Residue Gly78 participates in anthranilate binding. Ser90 is a Mg(2+) binding site. Position 109 (Asn109) interacts with anthranilate. Anthranilate is bound at residue Arg164. Mg(2+) contacts are provided by Asp222 and Glu223.

Belongs to the anthranilate phosphoribosyltransferase family. As to quaternary structure, homodimer. Mg(2+) is required as a cofactor.

It catalyses the reaction N-(5-phospho-beta-D-ribosyl)anthranilate + diphosphate = 5-phospho-alpha-D-ribose 1-diphosphate + anthranilate. It participates in amino-acid biosynthesis; L-tryptophan biosynthesis; L-tryptophan from chorismate: step 2/5. Its function is as follows. Catalyzes the transfer of the phosphoribosyl group of 5-phosphorylribose-1-pyrophosphate (PRPP) to anthranilate to yield N-(5'-phosphoribosyl)-anthranilate (PRA). The chain is Anthranilate phosphoribosyltransferase from Natronomonas pharaonis (strain ATCC 35678 / DSM 2160 / CIP 103997 / JCM 8858 / NBRC 14720 / NCIMB 2260 / Gabara) (Halobacterium pharaonis).